A 163-amino-acid chain; its full sequence is Bacterial microcompartment assembly protein PduM (163 aa).

This sequence belongs to the PduM family. As to quaternary structure, interacts with shell protein PduK.

The protein localises to the bacterial microcompartment. Its pathway is polyol metabolism; 1,2-propanediol degradation. Functionally, plays an essential role in assembly and/or stability of the bacterial microcompartment (BMC) dedicated to 1,2-propanediol (1,2-PD) degradation. Overexpression impairs BMC formation. In terms of biological role, the 1,2-PD-specific bacterial microcompartment (BMC) concentrates low levels of 1,2-PD catabolic enzymes, concentrates volatile reaction intermediates thus enhancing pathway flux and keeps the level of toxic, mutagenic propionaldehyde low. This Salmonella typhimurium (strain LT2 / SGSC1412 / ATCC 700720) protein is Bacterial microcompartment assembly protein PduM.